Here is a 49-residue protein sequence, read N- to C-terminus: Large ribosomal subunit protein bL33 (49 aa).

Belongs to the bacterial ribosomal protein bL33 family.

This is Large ribosomal subunit protein bL33 from Leuconostoc citreum (strain KM20).